We begin with the raw amino-acid sequence, 556 residues long: Amidophosphoribosyltransferase (556 aa).

A propeptide spanning residues 1–57 (MCLAVGVGVRAPKHVPQIRRLGRAGRRLRCVTNCALGSCPIVTVQQPGRDFSSPREE) is cleaved from the precursor. The active-site Nucleophile is Cys58. Positions 58–284 (CGVFGVWAPG…PGELLAIDAD (227 aa)) constitute a Glutamine amidotransferase type-2 domain. Cys299 is a binding site for [4Fe-4S] cluster. Mg(2+) is bound by residues Ser346, Asp408, and Asp409. 3 residues coordinate [4Fe-4S] cluster: Cys445, Cys501, and Cys504.

The protein in the C-terminal section; belongs to the purine/pyrimidine phosphoribosyltransferase family. It depends on Mg(2+) as a cofactor. [4Fe-4S] cluster is required as a cofactor.

The catalysed reaction is 5-phospho-beta-D-ribosylamine + L-glutamate + diphosphate = 5-phospho-alpha-D-ribose 1-diphosphate + L-glutamine + H2O. It participates in purine metabolism; IMP biosynthesis via de novo pathway; N(1)-(5-phospho-D-ribosyl)glycinamide from 5-phospho-alpha-D-ribose 1-diphosphate: step 1/2. Functionally, catalyzes the formation of phosphoribosylamine from phosphoribosylpyrophosphate (PRPP) and glutamine. The polypeptide is Amidophosphoribosyltransferase (Mycobacterium leprae (strain TN)).